A 159-amino-acid polypeptide reads, in one-letter code: Style cell-cycle inhibitor 1 (159 aa).

The segment at 1–86 (MVSERSSKEK…SDHKLKEGIP (86 aa)) is disordered. Residues 15-50 (ARSEDSSSSDYEEKVKRHRGTEKDDERRSRRSDKKD) show a composition bias toward basic and acidic residues. The span at 51-63 (KKSHKHHKSSTSK) shows a compositional bias: basic residues. Residues 64–85 (KSKDDKPKKKHTESDHKLKEGI) are compositionally biased toward basic and acidic residues.

It is found in the nucleus. Component of the auxin signaling transduction pathway that regulates cell proliferation and differentiation during flowers stigmas and styles development. Involved in the regulation of auxin-related genes. This chain is Style cell-cycle inhibitor 1, found in Arabidopsis thaliana (Mouse-ear cress).